The chain runs to 100 residues: Small ribosomal subunit protein uS14c (100 aa).

Belongs to the universal ribosomal protein uS14 family. Part of the 30S ribosomal subunit.

Its subcellular location is the plastid. The protein resides in the chloroplast. Binds 16S rRNA, required for the assembly of 30S particles. In Populus alba (White poplar), this protein is Small ribosomal subunit protein uS14c.